We begin with the raw amino-acid sequence, 440 residues long: MKTFFQFDELGTSYRNEIIGGLTTFLSMAYILFVNPITLALESVKDFPEALRIDQGAVFTATALASAAGCILMGLIARYPIAIAPGMGLNAFFAFSVVLGMGISWQAALSGVFISGLIFVALSLTGFREKIINAIPPELKLAVGAGIGLFITFVGLQGSGIITANPSTLVTIGNIHSGPVLLTIFGVIVTVILMVLRVNAGVFIGMLLTAVAGMIFGLVPVPTQIIGSVPSLAPTFGQAWIHLPDIFSVQMLIVILTFLFVGFFDTAGTLVAVATQAGLMKENKLPRAGRALLADSSSIVIGAVLGTSTTTSYVESSSGVAAGARSGFAAIVTGILFLLATFFSPLLSVVTSNVTAPALIIVGALMVAPLGKIAWDKFEVAVPAFLTMIMMPLTYSIATGIAIGFIFYPITMVCKGKAKEVHPIMYGLFVVFILYFIFLK.

The next 13 membrane-spanning stretches (helical) occupy residues 18–38 (IIGG…NPIT), 57–77 (AVFT…GLIA), 81–101 (IAIA…VLGM), 107–127 (AALS…LTGF), 142–162 (AVGA…SGII), 175–195 (IHSG…ILMV), 201–221 (GVFI…LVPV), 251–271 (MLIV…GTLV), 291–311 (ALLA…STTT), 327–347 (GFAA…SPLL), 354–374 (VTAP…GKIA), 388–408 (MIMM…FIFY), and 419–439 (KEVH…FIFL).

This sequence belongs to the nucleobase:cation symporter-2 (NCS2) (TC 2.A.40) family. Azg-like subfamily.

The protein resides in the cell membrane. Functionally, involved in the uptake of the purine bases hypoxanthine and guanine. In Bacillus subtilis (strain 168), this protein is Guanine/hypoxanthine permease PbuG (pbuG).